Reading from the N-terminus, the 174-residue chain is Period clock protein (174 aa).

A disordered region spans residues 46–134 (SSEGTGAGTG…GTGTGTGTGT (89 aa)). Repeat copies occupy residues 49–50 (GT), 51–52 (GA), 53–54 (GT), 55–56 (GT), 57–58 (GT), 59–60 (GT), 61–62 (GT), 63–64 (GT), 65–66 (GT), 67–68 (GT), 69–70 (GT), 71–72 (GT), 73–74 (GT), 75–76 (GT), 77–78 (GT), 79–80 (GT), 81–82 (GT), 83–84 (GT), 85–86 (GT), 87–88 (GT), 89–90 (GT), 91–92 (GT), 93–94 (GT), 95–96 (GT), 97–98 (GT), 99–100 (GT), 101–102 (GT), 103–104 (GT), 105–106 (GT), 107–108 (GT), 109–110 (GT), 111–112 (GT), 113–114 (GT), 115–116 (GT), 117–118 (GT), 119–120 (GT), 121–122 (GT), 123–124 (GT), 125–126 (GT), 127–128 (GT), 129–130 (GT), 131–132 (GT), 133–134 (GT), 135–136 (GT), and 137–138 (GT). Positions 49–138 (GTGAGTGTGT…GTGTGTGTGT (90 aa)) are 45 X 2 AA tandem repeats of G-[TA]. The segment covering 50 to 134 (TGAGTGTGTG…GTGTGTGTGT (85 aa)) has biased composition (gly residues).

It is found in the plastid. The protein resides in the chloroplast. This chain is Period clock protein, found in Acetabularia acetabulum (Mermaid's wine glass).